We begin with the raw amino-acid sequence, 469 residues long: tRNA-2-methylthio-N(6)-dimethylallyladenosine synthase (469 aa).

Residues 22-142 enclose the MTTase N-terminal domain; sequence RKVFIKTYGC…LPEALRRAKE (121 aa). Residues C31, C67, C105, C183, C187, and C190 each contribute to the [4Fe-4S] cluster site. The 233-residue stretch at 169-401 folds into the Radical SAM core domain; that stretch reads RARGVTAFLT…QALLLKQQQE (233 aa). Positions 404 to 466 constitute a TRAM domain; that stretch reads ESCIGKEIDL…NNSLFAERAE (63 aa).

It belongs to the methylthiotransferase family. MiaB subfamily. As to quaternary structure, monomer. It depends on [4Fe-4S] cluster as a cofactor.

The protein localises to the cytoplasm. It carries out the reaction N(6)-dimethylallyladenosine(37) in tRNA + (sulfur carrier)-SH + AH2 + 2 S-adenosyl-L-methionine = 2-methylsulfanyl-N(6)-dimethylallyladenosine(37) in tRNA + (sulfur carrier)-H + 5'-deoxyadenosine + L-methionine + A + S-adenosyl-L-homocysteine + 2 H(+). In terms of biological role, catalyzes the methylthiolation of N6-(dimethylallyl)adenosine (i(6)A), leading to the formation of 2-methylthio-N6-(dimethylallyl)adenosine (ms(2)i(6)A) at position 37 in tRNAs that read codons beginning with uridine. This Rhizobium leguminosarum bv. trifolii (strain WSM2304) protein is tRNA-2-methylthio-N(6)-dimethylallyladenosine synthase.